A 515-amino-acid chain; its full sequence is MSQITLIILILAIGFSCTKSHPINSTRDGEDSGTDLKNLLTEPANTTYATNSTLTRKELNSTIQPERNDEGSAIRKIMASKKDENITGQSEINTSAKSQPINSTRDGEDSGTDLKNLLTEPANTTYATNSTLTRKELNSSIPPERNDEGSAIRKIMASKKDEIITGQSEINTIAKSQPINSTRDGEDSGTDLKNLLTEPANTTYATNSTLTRKELNSSIPPERNDEGSAIRKIMASKKDEIITGQSEINTIAKSQPINSTRDGEDSGTDLKNLLTELANTTYLTNSTLTRKELNSIIQPERNDESSAIRKIMASKKDENVTGQSEINTSAKSQPINSTRDGEDSGTDLKNLLTDPANTTYATNSTLTRKELNSTIQPERNDETSAIRKIMASRKDENVTGQSEFNISTNSNLNTTTHHEDAVVSPTEKVYVPNNASSAELNVSSTIQPKEADATTSSANDIKKPAFPYCIILITFQIVTVGMIIYLVFRTMRKPCQSERAIPLNTFGFGNNSSHE.

Positions 1–20 are cleaved as a signal peptide; that stretch reads MSQITLIILILAIGFSCTKS. At 21–467 the chain is on the extracellular side; the sequence is HPINSTRDGE…ANDIKKPAFP (447 aa). 28 N-linked (GlcNAc...) asparagine; by host glycosylation sites follow: Asn24, Asn45, Asn51, Asn60, Asn85, Asn93, Asn102, Asn123, Asn129, Asn138, Asn180, Asn201, Asn207, Asn216, Asn258, Asn279, Asn285, Asn319, Asn327, Asn336, Asn357, Asn363, Asn372, Asn397, Asn405, Asn413, Asn434, and Asn441. A disordered region spans residues 80 to 114; it reads SKKDENITGQSEINTSAKSQPINSTRDGEDSGTDL. Residues 86–104 show a composition bias toward polar residues; that stretch reads ITGQSEINTSAKSQPINST. Residues 314-358 are disordered; it reads SKKDENVTGQSEINTSAKSQPINSTRDGEDSGTDLKNLLTDPANT. Polar residues predominate over residues 320–338; it reads VTGQSEINTSAKSQPINST. Residues 393–413 form a disordered region; it reads RKDENVTGQSEFNISTNSNLN. A helical membrane pass occupies residues 468 to 488; sequence YCIILITFQIVTVGMIIYLVF. The Cytoplasmic portion of the chain corresponds to 489–515; that stretch reads RTMRKPCQSERAIPLNTFGFGNNSSHE.

This sequence belongs to the polydnaviridae Glc1.8 protein family.

It localises to the host membrane. Its function is as follows. Involved in suppression of the insect cellular immune response. Inhibits host hemocyte adhesion and phagocytosis. In Microplitis demolitor (Parasitoid wasp), this protein is Mucin-like protein Glc1.8a (O9).